We begin with the raw amino-acid sequence, 290 residues long: 33 kDa chaperonin (290 aa).

2 disulfides stabilise this stretch: cysteine 235–cysteine 237 and cysteine 268–cysteine 271.

The protein belongs to the HSP33 family. Under oxidizing conditions two disulfide bonds are formed involving the reactive cysteines. Under reducing conditions zinc is bound to the reactive cysteines and the protein is inactive.

Its subcellular location is the cytoplasm. In terms of biological role, redox regulated molecular chaperone. Protects both thermally unfolding and oxidatively damaged proteins from irreversible aggregation. Plays an important role in the bacterial defense system toward oxidative stress. The protein is 33 kDa chaperonin of Streptococcus pyogenes serotype M3 (strain ATCC BAA-595 / MGAS315).